The chain runs to 761 residues: 5-methyltetrahydropteroyltriglutamate--homocysteine methyltransferase (761 aa).

5-methyltetrahydropteroyltri-L-glutamate is bound by residues 16-19 and Lys116; that span reads RELK. Residues 435 to 437 and Glu488 each bind L-homocysteine; that span reads IGS. Residues 435-437 and Glu488 contribute to the L-methionine site; that span reads IGS. Residues 519-520 and Trp565 each bind 5-methyltetrahydropteroyltri-L-glutamate; that span reads RC. Position 603 (Asp603) interacts with L-homocysteine. Asp603 is a binding site for L-methionine. 5-methyltetrahydropteroyltri-L-glutamate is bound at residue Glu609. Residues His645, Cys647, and Glu669 each contribute to the Zn(2+) site. Residue His698 is the Proton donor of the active site. A Zn(2+)-binding site is contributed by Cys730.

This sequence belongs to the vitamin-B12 independent methionine synthase family. It depends on Zn(2+) as a cofactor.

The catalysed reaction is 5-methyltetrahydropteroyltri-L-glutamate + L-homocysteine = tetrahydropteroyltri-L-glutamate + L-methionine. Its pathway is amino-acid biosynthesis; L-methionine biosynthesis via de novo pathway; L-methionine from L-homocysteine (MetE route): step 1/1. Its function is as follows. Catalyzes the transfer of a methyl group from 5-methyltetrahydrofolate to homocysteine resulting in methionine formation. The protein is 5-methyltetrahydropteroyltriglutamate--homocysteine methyltransferase of Hahella chejuensis (strain KCTC 2396).